Consider the following 196-residue polypeptide: uncharacterized protein (196 aa).

This is an uncharacterized protein from Saccharolobus islandicus (Sulfolobus islandicus).